The chain runs to 228 residues: Uracil-DNA glycosylase (228 aa).

Catalysis depends on D64, which acts as the Proton acceptor.

Belongs to the uracil-DNA glycosylase (UDG) superfamily. UNG family.

The protein resides in the cytoplasm. It carries out the reaction Hydrolyzes single-stranded DNA or mismatched double-stranded DNA and polynucleotides, releasing free uracil.. In terms of biological role, excises uracil residues from the DNA which can arise as a result of misincorporation of dUMP residues by DNA polymerase or due to deamination of cytosine. The polypeptide is Uracil-DNA glycosylase (Yersinia pestis bv. Antiqua (strain Antiqua)).